Here is a 475-residue protein sequence, read N- to C-terminus: Protein ABCI7, chloroplastic (475 aa).

A chloroplast-targeting transit peptide spans 1–36 (MAAATVLGRLSLIPNLSSKPKLKSNRRTTSTSVSVR).

In terms of assembly, interacts with NAP7.

The protein localises to the plastid. The protein resides in the chloroplast. This chain is Protein ABCI7, chloroplastic (ABCI7), found in Arabidopsis thaliana (Mouse-ear cress).